The sequence spans 338 residues: Phenylalanine--tRNA ligase alpha subunit (338 aa).

Glu252 is a binding site for Mg(2+).

This sequence belongs to the class-II aminoacyl-tRNA synthetase family. Phe-tRNA synthetase alpha subunit type 1 subfamily. Tetramer of two alpha and two beta subunits. The cofactor is Mg(2+).

The protein resides in the cytoplasm. The catalysed reaction is tRNA(Phe) + L-phenylalanine + ATP = L-phenylalanyl-tRNA(Phe) + AMP + diphosphate + H(+). The sequence is that of Phenylalanine--tRNA ligase alpha subunit from Pseudomonas aeruginosa (strain ATCC 15692 / DSM 22644 / CIP 104116 / JCM 14847 / LMG 12228 / 1C / PRS 101 / PAO1).